A 374-amino-acid polypeptide reads, in one-letter code: MVVGIHRPSKLVINAEAIRNNVKNEISRLDGHSELFAVVKANGYGHGIVETAQFTKQAGATGFCVAILDEALALRDAGLTETILVLGITDVKYAKLAAENDISLTVGDQAWLDEATQILNQKPLKVHLGIDTGMGRIGFQDGASFKKAADYLEQSQQFNFEGVFTHFATADEKDTTYFNLQVERFNHFISQLTRRPRYVHVSNTATSLWHAACNGNMIRFGVGIYGMNPSGKTLESPFDLQPAMSLESELSFSKLVQKGRSISYGATYTAEEDEWIGTIPIGYADGYERRLQGFHVLIDGQFCEIVGRICMDQMMVRLPKSYPVGTKVILAGKSGEKSITMTDIAEYAGTINYEITCGFTQRLPRIYTENGVVN.

K40 acts as the Proton acceptor; specific for D-alanine in catalysis. At K40 the chain carries N6-(pyridoxal phosphate)lysine. A substrate-binding site is contributed by R136. Residue Y264 is the Proton acceptor; specific for L-alanine of the active site. M311 is a substrate binding site.

This sequence belongs to the alanine racemase family. Pyridoxal 5'-phosphate is required as a cofactor.

The catalysed reaction is L-alanine = D-alanine. It functions in the pathway amino-acid biosynthesis; D-alanine biosynthesis; D-alanine from L-alanine: step 1/1. In terms of biological role, catalyzes the interconversion of L-alanine and D-alanine. May also act on other amino acids. The sequence is that of Alanine racemase (alr) from Pediococcus pentosaceus (strain ATCC 25745 / CCUG 21536 / LMG 10740 / 183-1w).